Consider the following 298-residue polypeptide: Max-like protein X (298 aa).

Residues 1–63 (MTEPGASPED…ARGCREDSSH (63 aa)) form a disordered region. Position 7 is a phosphoserine (Ser-7). Basic residues predominate over residues 28–37 (GRARARRGSG). Residues Ser-45, Ser-48, Ser-74, Ser-77, and Ser-98 each carry the phosphoserine modification. The span at 98-109 (SIGSTSASSVPN) shows a compositional bias: polar residues. Residues 98–119 (SIGSTSASSVPNTDDEDSDYQQ) are disordered. In terms of domain architecture, bHLH spans 129–187 (RRRRAHTQAEQKRRDAIKRGYDDLQTIVPTCQQQDFSIGSQKLSKAIVLQKTIDYIQFL). The leucine-zipper stretch occupies residues 194–214 (QEEEVSTLRKDVTALKIMKVN).

Efficient DNA binding requires dimerization with another bHLH protein. Binds DNA as a heterodimer with MAD1, MAD4, MNT, WBSCR14 and MLXIP. Can also bind DNA as a homodimer. Expressed in all tissues examined: stomach, duodenum, jejunum, ileum, colon, liver, pancreas, salivary gland, kidney, spleen, lung, heart, skeletal muscle, brain, ovary and testis.

It is found in the cytoplasm. The protein localises to the nucleus. Its function is as follows. Transcription regulator. Forms a sequence-specific DNA-binding protein complex with MAD1, MAD4, MNT, WBSCR14 and MLXIP which recognizes the core sequence 5'-CACGTG-3'. The TCFL4-MAD1, TCFL4-MAD4, TCFL4-WBSCR14 complexes are transcriptional repressors. Plays a role in transcriptional activation of glycolytic target genes. Involved in glucose-responsive gene regulation. In Mus musculus (Mouse), this protein is Max-like protein X (Mlx).